We begin with the raw amino-acid sequence, 406 residues long: Nicotinate phosphoribosyltransferase (406 aa).

His-226 bears the Phosphohistidine; by autocatalysis mark.

This sequence belongs to the NAPRTase family. Transiently phosphorylated on a His residue during the reaction cycle. Phosphorylation strongly increases the affinity for substrates and increases the rate of nicotinate D-ribonucleotide production. Dephosphorylation regenerates the low-affinity form of the enzyme, leading to product release.

The catalysed reaction is nicotinate + 5-phospho-alpha-D-ribose 1-diphosphate + ATP + H2O = nicotinate beta-D-ribonucleotide + ADP + phosphate + diphosphate. The protein operates within cofactor biosynthesis; NAD(+) biosynthesis; nicotinate D-ribonucleotide from nicotinate: step 1/1. In terms of biological role, catalyzes the synthesis of beta-nicotinate D-ribonucleotide from nicotinate and 5-phospho-D-ribose 1-phosphate at the expense of ATP. In Verminephrobacter eiseniae (strain EF01-2), this protein is Nicotinate phosphoribosyltransferase.